The primary structure comprises 352 residues: Probable dual-specificity RNA methyltransferase RlmN (352 aa).

Glu99 functions as the Proton acceptor in the catalytic mechanism. The 235-residue stretch at 105-339 (TKSRTTACVS…VTVRRSRGKD (235 aa)) folds into the Radical SAM core domain. A disulfide bridge connects residues Cys112 and Cys344. 3 residues coordinate [4Fe-4S] cluster: Cys119, Cys123, and Cys126. Residues 170–171 (GE), Ser202, 225–227 (SLH), and Asn301 contribute to the S-adenosyl-L-methionine site. Cys344 serves as the catalytic S-methylcysteine intermediate.

This sequence belongs to the radical SAM superfamily. RlmN family. It depends on [4Fe-4S] cluster as a cofactor.

The protein localises to the cytoplasm. The enzyme catalyses adenosine(2503) in 23S rRNA + 2 reduced [2Fe-2S]-[ferredoxin] + 2 S-adenosyl-L-methionine = 2-methyladenosine(2503) in 23S rRNA + 5'-deoxyadenosine + L-methionine + 2 oxidized [2Fe-2S]-[ferredoxin] + S-adenosyl-L-homocysteine. The catalysed reaction is adenosine(37) in tRNA + 2 reduced [2Fe-2S]-[ferredoxin] + 2 S-adenosyl-L-methionine = 2-methyladenosine(37) in tRNA + 5'-deoxyadenosine + L-methionine + 2 oxidized [2Fe-2S]-[ferredoxin] + S-adenosyl-L-homocysteine. In terms of biological role, specifically methylates position 2 of adenine 2503 in 23S rRNA and position 2 of adenine 37 in tRNAs. This Christiangramia forsetii (strain DSM 17595 / CGMCC 1.15422 / KT0803) (Gramella forsetii) protein is Probable dual-specificity RNA methyltransferase RlmN.